The primary structure comprises 497 residues: Di-/tripeptide transporter (497 aa).

Transmembrane regions (helical) follow at residues 3 to 23 (AILL…MSQT), 26 to 46 (ASIM…GGWL), 57 to 77 (VFYG…PAGV), 84 to 104 (IALI…MVGG), 119 to 139 (IFVF…PWAA), 155 to 175 (AGFS…VLGG), 199 to 219 (IKWV…MAGV), 227 to 247 (VITL…VMMF), 294 to 314 (FIIL…KVII), 321 to 341 (LVLL…TFVL), 372 to 392 (GIEI…LIIL), and 452 to 472 (IVII…WSYI).

The protein belongs to the major facilitator superfamily. Proton-dependent oligopeptide transporter (POT/PTR) (TC 2.A.17) family.

Its subcellular location is the cell membrane. In terms of biological role, proton-dependent uptake of di- or tri-peptides. The sequence is that of Di-/tripeptide transporter (dtpT) from Lactobacillus helveticus (Lactobacillus suntoryeus).